Here is a 118-residue protein sequence, read N- to C-terminus: UPF0102 protein Arth_2474 (118 aa).

It belongs to the UPF0102 family.

The sequence is that of UPF0102 protein Arth_2474 from Arthrobacter sp. (strain FB24).